A 338-amino-acid polypeptide reads, in one-letter code: MTDSNLLGLTCWLIDTRTLWPGQHIKDAASDILHLLSNDERNAVLRKIFIADARMSLASALLKRLYISRALNIPWRDVKIARKGDPTHGKPCAVLPDGSFAPIDFNVSHQAGLVSLVGWNPPPGQSQSALVGTDIVCVNERDDYRTIDQEGFDAWIDIYEDVFSEAERWDMKYNVDYITLLDGRIIQGNSLGRVDRCVRRNKDLSITLPTGETHSFNSDLLIDAKLRRFYSFFCYKEAYIKLAGEALLAPWLKELEFQNVKSPKPGTVARCSTHGTWGEKVSDVEVVLHGEKVEDVKMTLQAFEENFMLATAVQGLRDLEAPPFTKLNLENDVVAFAS.

This sequence belongs to the P-Pant transferase superfamily.

The enzyme catalyses apo-[ACP] + CoA = holo-[ACP] + adenosine 3',5'-bisphosphate + H(+). Acyl-carrier-protein synthase that transfers the 4'-phosphopantetheine moiety from coenzyme A to a Ser of an acyl-carrier-protein. The 4'-phosphopantetheine (4'-PPT) portion of CoA provides the essential prosthetic group for a number of carrier proteins and multi-domain enzymes, priming them for the acceptance of acyl building blocks in fatty acid synthesis and many aspects of secondary metabolism mediated by polyketide synthases (PKSs) and non-ribosomal peptide synthetases (NRPSs). Plays a key role in liamocins biosynthesis by activationg the HR-PKS PKS1 that produces 3,5-dihydroxydecanoic acid, a precursor of liamocins. The polypeptide is 4'-phosphopantetheinyl transferase (Aureobasidium melanogenum (Aureobasidium pullulans var. melanogenum)).